The following is a 298-amino-acid chain: Phosphatidylserine decarboxylase proenzyme (298 aa).

Catalysis depends on charge relay system; for autoendoproteolytic cleavage activity residues Asp-113, His-169, and Ser-256. Residue Ser-256 is the Schiff-base intermediate with substrate; via pyruvic acid; for decarboxylase activity of the active site. A Pyruvic acid (Ser); by autocatalysis modification is found at Ser-256.

Belongs to the phosphatidylserine decarboxylase family. PSD-B subfamily. Prokaryotic type II sub-subfamily. In terms of assembly, heterodimer of a large membrane-associated beta subunit and a small pyruvoyl-containing alpha subunit. Pyruvate serves as cofactor. Is synthesized initially as an inactive proenzyme. Formation of the active enzyme involves a self-maturation process in which the active site pyruvoyl group is generated from an internal serine residue via an autocatalytic post-translational modification. Two non-identical subunits are generated from the proenzyme in this reaction, and the pyruvate is formed at the N-terminus of the alpha chain, which is derived from the carboxyl end of the proenzyme. The autoendoproteolytic cleavage occurs by a canonical serine protease mechanism, in which the side chain hydroxyl group of the serine supplies its oxygen atom to form the C-terminus of the beta chain, while the remainder of the serine residue undergoes an oxidative deamination to produce ammonia and the pyruvoyl prosthetic group on the alpha chain. During this reaction, the Ser that is part of the protease active site of the proenzyme becomes the pyruvoyl prosthetic group, which constitutes an essential element of the active site of the mature decarboxylase.

It is found in the cell membrane. It carries out the reaction a 1,2-diacyl-sn-glycero-3-phospho-L-serine + H(+) = a 1,2-diacyl-sn-glycero-3-phosphoethanolamine + CO2. It functions in the pathway phospholipid metabolism; phosphatidylethanolamine biosynthesis; phosphatidylethanolamine from CDP-diacylglycerol: step 2/2. Functionally, catalyzes the formation of phosphatidylethanolamine (PtdEtn) from phosphatidylserine (PtdSer). This chain is Phosphatidylserine decarboxylase proenzyme, found in Desulfitobacterium hafniense (strain Y51).